The following is a 457-amino-acid chain: Bifunctional protein GlmU (457 aa).

The tract at residues 1-229 (MYNCAIILAA…YEEIMGVNSR (229 aa)) is pyrophosphorylase. UDP-N-acetyl-alpha-D-glucosamine-binding positions include 8-11 (LAAG), lysine 22, glutamine 73, and 78-79 (GT). Aspartate 103 provides a ligand contact to Mg(2+). The UDP-N-acetyl-alpha-D-glucosamine site is built by glycine 140, glutamate 155, asparagine 170, and asparagine 227. Residue asparagine 227 coordinates Mg(2+). Residues 230–250 (VQLSEAEIVMRKRINHKHMVN) form a linker region. The tract at residues 251 to 457 (GVTFIDCEST…WLDKKGLLKK (207 aa)) is N-acetyltransferase. Residues arginine 332 and lysine 350 each contribute to the UDP-N-acetyl-alpha-D-glucosamine site. Histidine 362 (proton acceptor) is an active-site residue. UDP-N-acetyl-alpha-D-glucosamine-binding residues include tyrosine 365 and asparagine 376. Acetyl-CoA is bound by residues 385–386 (NY), alanine 422, and arginine 439.

This sequence in the N-terminal section; belongs to the N-acetylglucosamine-1-phosphate uridyltransferase family. It in the C-terminal section; belongs to the transferase hexapeptide repeat family. In terms of assembly, homotrimer. Requires Mg(2+) as cofactor.

Its subcellular location is the cytoplasm. The catalysed reaction is alpha-D-glucosamine 1-phosphate + acetyl-CoA = N-acetyl-alpha-D-glucosamine 1-phosphate + CoA + H(+). It carries out the reaction N-acetyl-alpha-D-glucosamine 1-phosphate + UTP + H(+) = UDP-N-acetyl-alpha-D-glucosamine + diphosphate. Its pathway is nucleotide-sugar biosynthesis; UDP-N-acetyl-alpha-D-glucosamine biosynthesis; N-acetyl-alpha-D-glucosamine 1-phosphate from alpha-D-glucosamine 6-phosphate (route II): step 2/2. It functions in the pathway nucleotide-sugar biosynthesis; UDP-N-acetyl-alpha-D-glucosamine biosynthesis; UDP-N-acetyl-alpha-D-glucosamine from N-acetyl-alpha-D-glucosamine 1-phosphate: step 1/1. It participates in bacterial outer membrane biogenesis; LPS lipid A biosynthesis. Catalyzes the last two sequential reactions in the de novo biosynthetic pathway for UDP-N-acetylglucosamine (UDP-GlcNAc). The C-terminal domain catalyzes the transfer of acetyl group from acetyl coenzyme A to glucosamine-1-phosphate (GlcN-1-P) to produce N-acetylglucosamine-1-phosphate (GlcNAc-1-P), which is converted into UDP-GlcNAc by the transfer of uridine 5-monophosphate (from uridine 5-triphosphate), a reaction catalyzed by the N-terminal domain. This chain is Bifunctional protein GlmU, found in Clostridium botulinum (strain Kyoto / Type A2).